Consider the following 304-residue polypeptide: Retrotransposon Gag-like protein 4 (304 aa).

Residues 276–293 form a CCHC-type zinc finger; sequence QLCVYCNQAGHFTRDCLA.

In terms of tissue distribution, in adults, expressed in brain, eye, kidney, ovary and testis. Weakly expressed in thymus, heart and muscle.

Its function is as follows. Involved in cognitive function in the brain, possibly via the noradrenergic system. This is Retrotransposon Gag-like protein 4 from Mus musculus (Mouse).